A 135-amino-acid chain; its full sequence is UPF0102 protein Mjls_1965 (135 aa).

The protein belongs to the UPF0102 family.

The protein is UPF0102 protein Mjls_1965 of Mycobacterium sp. (strain JLS).